The primary structure comprises 150 residues: MGLEKSLILFSLLVLVLGWVQPSLGRKPSVQDFKRQHMDPDSPPNSRPTYCNQMMKRRGMTKGSCKRVNTFVHESWATVKAICSQRQMTCKTSSRNNCHKSSSPLHITDCRLKGSSKYPNCDYTTTNSQKHIIIACEGNPLVPVHYDASV.

The first 25 residues, 1–25, serve as a signal peptide directing secretion; the sequence is MGLEKSLILFSLLVLVLGWVQPSLG. Position 35 (arginine 35) interacts with substrate. Catalysis depends on histidine 37, which acts as the Proton acceptor. 4 cysteine pairs are disulfide-bonded: cysteine 51–cysteine 110, cysteine 65–cysteine 121, cysteine 83–cysteine 136, and cysteine 90–cysteine 98. Residues 66-70, lysine 91, and arginine 111 each bind substrate; that span reads KRVNT. The active-site Proton donor is the histidine 145.

The protein belongs to the pancreatic ribonuclease family. Monomer.

It localises to the secreted. The catalysed reaction is an [RNA] containing cytidine + H2O = an [RNA]-3'-cytidine-3'-phosphate + a 5'-hydroxy-ribonucleotide-3'-[RNA].. It catalyses the reaction an [RNA] containing uridine + H2O = an [RNA]-3'-uridine-3'-phosphate + a 5'-hydroxy-ribonucleotide-3'-[RNA].. Its function is as follows. Endonuclease that catalyzes the cleavage of RNA on the 3' side of pyrimidine nucleotides. Acts on single-stranded and double-stranded RNA. The chain is Ribonuclease pancreatic delta-type from Rattus exulans (Polynesian rat).